Consider the following 125-residue polypeptide: Cytochrome c oxidase assembly factor 6 homolog (125 aa).

The residue at position 2 (glycine 2) is an N-acetylalanine. The CHCH domain occupies 55-98 (RQVCWGARDEYWKCLDENLEDASQCKKLRSSFESSCPQQWIKYF). The Cx9C motif signature appears at 58 to 68 (CWGARDEYWKC). 2 disulfide bridges follow: cysteine 58–cysteine 90 and cysteine 68–cysteine 79. A Cx10C motif motif is present at residues 79-90 (CKKLRSSFESSC).

Belongs to the cytochrome c oxidase subunit 6B family. In terms of assembly, interacts with COA1. Found in a complex with TMEM177, COX20, MT-CO2/COX2, COX18, SCO1 and SCO2. Interacts with MT-CO2/COX2 and SCO2. Interacts with SCO1. Interacts with COX20 in a MT-CO2/COX2- and COX18-dependent manner. Interacts with COX16.

The protein resides in the mitochondrion intermembrane space. Involved in the maturation of the mitochondrial respiratory chain complex IV subunit MT-CO2/COX2. Thereby, may regulate early steps of complex IV assembly. Mitochondrial respiratory chain complex IV or cytochrome c oxidase is the component of the respiratory chain that catalyzes the transfer of electrons from intermembrane space cytochrome c to molecular oxygen in the matrix and as a consequence contributes to the proton gradient involved in mitochondrial ATP synthesis. May also be required for efficient formation of respiratory supercomplexes comprised of complexes III and IV. This Homo sapiens (Human) protein is Cytochrome c oxidase assembly factor 6 homolog (COA6).